Here is a 275-residue protein sequence, read N- to C-terminus: Pyridoxal phosphate homeostasis protein (275 aa).

Position 6 is a phosphoserine (Ser6). The residue at position 47 (Lys47) is an N6-(pyridoxal phosphate)lysine. The residue at position 69 (Tyr69) is a Phosphotyrosine. The residue at position 125 (Lys125) is an N6-succinyllysine. Phosphoserine is present on residues Ser226 and Ser244. Residues Asp251–Ala263 show a composition bias toward basic and acidic residues. The interval Asp251 to His275 is disordered.

Belongs to the pyridoxal phosphate-binding protein YggS/PROSC family. In terms of tissue distribution, ubiquitous.

Functionally, pyridoxal 5'-phosphate (PLP)-binding protein, which may be involved in intracellular homeostatic regulation of pyridoxal 5'-phosphate (PLP), the active form of vitamin B6. This chain is Pyridoxal phosphate homeostasis protein, found in Homo sapiens (Human).